Reading from the N-terminus, the 128-residue chain is Sulfurtransferase TusD (128 aa).

The Cysteine persulfide intermediate role is filled by cysteine 78.

Belongs to the DsrE/TusD family. In terms of assembly, heterohexamer, formed by a dimer of trimers. The hexameric TusBCD complex contains 2 copies each of TusB, TusC and TusD. The TusBCD complex interacts with TusE.

It is found in the cytoplasm. Functionally, part of a sulfur-relay system required for 2-thiolation of 5-methylaminomethyl-2-thiouridine (mnm(5)s(2)U) at tRNA wobble positions. Accepts sulfur from TusA and transfers it in turn to TusE. This is Sulfurtransferase TusD from Buchnera aphidicola subsp. Acyrthosiphon pisum (strain 5A).